The sequence spans 191 residues: MNTVLKILMAGVDEVGRGPLAGAVVTAAVILKKPIDGLTDSKKLSPKQRNLLAIRIKEEALAFAYGRAEVEEIDQLNIHHATLLAMRRAVEALPIQPDNVFVDGAFTPQLNIPCKAIVQGDSLIPEISAASILAKVLRDEEMVALDKIYPGYGFAEHKGYATPVHKEALMRLGPCKIHRRSYSPVADLISK.

An RNase H type-2 domain is found at 7–191 (ILMAGVDEVG…YSPVADLISK (185 aa)). A divalent metal cation is bound by residues D13, E14, and D103.

Belongs to the RNase HII family. Mn(2+) is required as a cofactor. The cofactor is Mg(2+).

The protein localises to the cytoplasm. It carries out the reaction Endonucleolytic cleavage to 5'-phosphomonoester.. Endonuclease that specifically degrades the RNA of RNA-DNA hybrids. This Legionella pneumophila subsp. pneumophila (strain Philadelphia 1 / ATCC 33152 / DSM 7513) protein is Ribonuclease HII.